The following is a 282-amino-acid chain: Aldo-keto reductase ML1669 (282 aa).

Tyrosine 57 (proton donor) is an active-site residue. Residues leucine 197, valine 235, arginine 237, serine 238, alanine 239, serine 246, asparagine 247, and arginine 273 each coordinate NADPH.

It belongs to the aldo/keto reductase family.

In Mycobacterium leprae (strain TN), this protein is Aldo-keto reductase ML1669.